Consider the following 93-residue polypeptide: Aspartyl/glutamyl-tRNA(Asn/Gln) amidotransferase subunit C (93 aa).

Belongs to the GatC family. As to quaternary structure, heterotrimer of A, B and C subunits.

It catalyses the reaction L-glutamyl-tRNA(Gln) + L-glutamine + ATP + H2O = L-glutaminyl-tRNA(Gln) + L-glutamate + ADP + phosphate + H(+). It carries out the reaction L-aspartyl-tRNA(Asn) + L-glutamine + ATP + H2O = L-asparaginyl-tRNA(Asn) + L-glutamate + ADP + phosphate + 2 H(+). Allows the formation of correctly charged Asn-tRNA(Asn) or Gln-tRNA(Gln) through the transamidation of misacylated Asp-tRNA(Asn) or Glu-tRNA(Gln) in organisms which lack either or both of asparaginyl-tRNA or glutaminyl-tRNA synthetases. The reaction takes place in the presence of glutamine and ATP through an activated phospho-Asp-tRNA(Asn) or phospho-Glu-tRNA(Gln). This chain is Aspartyl/glutamyl-tRNA(Asn/Gln) amidotransferase subunit C, found in Methanocella arvoryzae (strain DSM 22066 / NBRC 105507 / MRE50).